The following is a 406-amino-acid chain: Angiopoietin-related protein 4 (406 aa).

A signal peptide spans 1 to 25 (MSGAPTAGAALMLCAATAVLLSAQG). Residues 100–143 (EVLHSLQTQLKAQNSRIQQLFHKVAQQQRHLEKQHLRIQHLQSQ) are a coiled coil. N-linked (GlcNAc...) asparagine glycosylation occurs at Asn-177. A Fibrinogen C-terminal domain is found at 179-401 (SRLHRLPRDC…ATTMLIQPMA (223 aa)). Intrachain disulfides connect Cys-188-Cys-216 and Cys-341-Cys-354.

Homooligomer; disulfide-linked via Cys residues in the N-terminal part of the protein. The homooligomer undergoes proteolytic processing to release the ANGPTL4 C-terminal chain, which circulates as a monomer. The homooligomer unprocessed form is able to interact with the extracellular matrix. In terms of processing, N-glycosylated. Post-translationally, forms disulfide-linked dimers and tetramers. Cleaved into a smaller N-terminal chain and a larger chain that contains the fibrinogen C-terminal domain; both cleaved and uncleaved forms are detected in the extracellular space. The cleaved form is not present within the cell. As to expression, detected in blood plasma (at protein level). Detected in liver. Detected in white fat tissue and placenta. Expressed at high levels in the placenta, heart, liver, muscle, pancreas and lung but expressed poorly in the brain and kidney.

The protein localises to the secreted. Its subcellular location is the extracellular space. The protein resides in the extracellular matrix. Mediates inactivation of the lipoprotein lipase LPL, and thereby plays a role in the regulation of triglyceride clearance from the blood serum and in lipid metabolism. May also play a role in regulating glucose homeostasis and insulin sensitivity. Inhibits proliferation, migration, and tubule formation of endothelial cells and reduces vascular leakage. Upon heterologous expression, inhibits the adhesion of endothelial cell to the extracellular matrix (ECM), and inhibits the reorganization of the actin cytoskeleton, formation of actin stress fibers and focal adhesions in endothelial cells that have adhered to ANGPTL4-containing ECM (in vitro). Depending on context, may modulate tumor-related angiogenesis. Its function is as follows. Mediates inactivation of the lipoprotein lipase LPL, and thereby plays an important role in the regulation of triglyceride clearance from the blood serum and in lipid metabolism. Has higher activity in LPL inactivation than the uncleaved protein. This chain is Angiopoietin-related protein 4 (ANGPTL4), found in Homo sapiens (Human).